A 463-amino-acid polypeptide reads, in one-letter code: Exodeoxyribonuclease 7 large subunit (463 aa).

This sequence belongs to the XseA family. Heterooligomer composed of large and small subunits.

It is found in the cytoplasm. The enzyme catalyses Exonucleolytic cleavage in either 5'- to 3'- or 3'- to 5'-direction to yield nucleoside 5'-phosphates.. Functionally, bidirectionally degrades single-stranded DNA into large acid-insoluble oligonucleotides, which are then degraded further into small acid-soluble oligonucleotides. This Bordetella pertussis (strain Tohama I / ATCC BAA-589 / NCTC 13251) protein is Exodeoxyribonuclease 7 large subunit.